A 491-amino-acid chain; its full sequence is Non-structural protein 1 (491 aa).

The segment at 1–81 (MATFKDACYH…CFLDEEPHLL (81 aa)) is RNA-binding. The zinc-binding domain stretch occupies residues 42-79 (CLDCCQYTNLTYCRGCALYHVCQWCSQYNRCFLDEEPH). Residues 82 to 176 (RMRTFKDVVT…ENQTPFQFIN (95 aa)) form an important for cytoskeleton localization region. The segment at 320–491 (NVHNCKWCQI…EYDLELSDVE (172 aa)) is interaction with host IRF3. A pLxIS motif motif is present at residues 485–488 (LELS).

It belongs to the rotavirus NSP1 family. Interacts (via C-terminus) with host IRF3; this interaction leads to IRF3 degradation. Interacts with host IRF7; this interaction leads to IRF7 degradation. Interacts with host CUL1 and CUL3.

It localises to the host cytoplasm. Its subcellular location is the host cytoskeleton. In terms of biological role, plays a role in the inhibition of host innate immunity by inducing the degradation of key host factors required to activate interferon production such as IRF3, IRF5 or IRF7. Associates with components of cullin RING ligases (CRLs) including CUL1 or CUL3, which are essential multisubunit ubiquitination complexes, to modulate their activities. This chain is Non-structural protein 1, found in Bos taurus (Bovine).